Consider the following 644-residue polypeptide: Exoribonuclease 2 (644 aa).

The RNB domain maps to 189–516; sequence RQDLTALNFV…NHRLLKAVIK (328 aa). The region spanning 561–643 is the S1 motif domain; sequence NTRFAAEIID…ETRSIIARPA (83 aa).

This sequence belongs to the RNR ribonuclease family. RNase II subfamily.

It localises to the cytoplasm. The catalysed reaction is Exonucleolytic cleavage in the 3'- to 5'-direction to yield nucleoside 5'-phosphates.. Functionally, involved in mRNA degradation. Hydrolyzes single-stranded polyribonucleotides processively in the 3' to 5' direction. The protein is Exoribonuclease 2 of Salmonella newport (strain SL254).